The primary structure comprises 127 residues: Major sperm protein 38 (127 aa).

Position 2 is an N-acetylalanine (Ala-2). In terms of domain architecture, MSP spans 9–126; sequence DIQTQPGTKI…RRKNLPIEYN (118 aa).

In terms of tissue distribution, sperm.

It localises to the cell projection. Its subcellular location is the pseudopodium. The protein resides in the cytoplasm. It is found in the cytoskeleton. In terms of biological role, central component in molecular interactions underlying sperm crawling. Forms an extensive filament system that extends from sperm villipoda, along the leading edge of the pseudopod. In Caenorhabditis elegans, this protein is Major sperm protein 38 (msp-38).